Consider the following 1412-residue polypeptide: uncharacterized protein (1412 aa).

The segment at 1 to 22 is disordered; it reads MESINVVNSVEDLPGFNPDENV. Coiled-coil stretches lie at residues 317–377 and 732–800; these read NNDF…ILRH and SKEA…SDDE. Residues 778 to 808 are disordered; that stretch reads SRKRKHEDIVKEHEAEKRDSDDEDDFEEVDV. A compositionally biased stretch (basic and acidic residues) spans 783-797; the sequence is HEDIVKEHEAEKRDS. Acidic residues predominate over residues 798-808; it reads DDEDDFEEVDV.

This is an uncharacterized protein from Magallana gigas (Pacific oyster).